The sequence spans 267 residues: MDIVTDKNIGSNFLADSNNRIYILIGDTDNVIDKYLVSILGKIEFYYVYEITVEDSKLINTFVTSNLLCPIKNKFNIKIYHDYKKVIGSCILNVDGKFTRYKDPSKLHVYVFCYRYNNCLNTCTMVKCHELLYPEKEIIVDGYKINDMSFFYTNPEIIKQHTDIKDYETLYKNIFLRRELNRVILGKPSDLIETLKEIVTINSEDIWKVIVSNDIFDSRDVIKLINFDYDREDFLSFVRAWYSNQLNNCKEDNNKIEKVYEIVRNSI.

Belongs to the chordopoxvirinae D3 family.

The protein localises to the virion. Its function is as follows. Late protein which is part of a large complex required for early virion morphogenesis. This complex participates in the formation of virosomes and the incorporation of virosomal contents into nascent immature virions. The protein is 27 kDa core protein of Canarypox virus (CNPV).